The sequence spans 152 residues: MKFTTPISLISLFVSSALAAPTPENEARDAIPVSVSYDPRYDNAGTSMNDVSCSNGVNGLVTKWPTFGSVPGFARIGGAPTIPGWNSPNCGKCYKLQYEQNTIYVTAIDAAPGGFNIATSAMDQLTNGMAVELGRVQATYEEADPSHCASGV.

A signal peptide spans 1 to 19 (MKFTTPISLISLFVSSALA). 2 cysteine pairs are disulfide-bonded: Cys53–Cys90 and Cys93–Cys148.

This sequence belongs to the cerato-platanin family.

It localises to the secreted. In Aspergillus fumigatus (strain ATCC MYA-4609 / CBS 101355 / FGSC A1100 / Af293) (Neosartorya fumigata), this protein is Allergen Asp f 15.